The sequence spans 239 residues: Probable methylthioribulose-1-phosphate dehydratase (239 aa).

Substrate is bound at residue Cys100. 2 residues coordinate Zn(2+): His118 and His120. Glu141 functions as the Proton donor/acceptor in the catalytic mechanism. Position 197 (His197) interacts with Zn(2+).

Belongs to the aldolase class II family. MtnB subfamily. The cofactor is Zn(2+).

The protein resides in the cytoplasm. It catalyses the reaction 5-(methylsulfanyl)-D-ribulose 1-phosphate = 5-methylsulfanyl-2,3-dioxopentyl phosphate + H2O. Its pathway is amino-acid biosynthesis; L-methionine biosynthesis via salvage pathway; L-methionine from S-methyl-5-thio-alpha-D-ribose 1-phosphate: step 2/6. Catalyzes the dehydration of methylthioribulose-1-phosphate (MTRu-1-P) into 2,3-diketo-5-methylthiopentyl-1-phosphate (DK-MTP-1-P). The protein is Probable methylthioribulose-1-phosphate dehydratase of Leishmania major.